A 285-amino-acid chain; its full sequence is Non-homologous end joining protein Ku (285 aa).

Residues 9 to 176 (ISFGLVNVPV…PAEIRHLEAS (168 aa)) form the Ku domain. The interval 250 to 285 (AMTDQKKQQNTAESETEEKPTKSTLTPRGRRKVKGA) is disordered.

It belongs to the prokaryotic Ku family. Homodimer. Interacts with LigD.

With LigD forms a non-homologous end joining (NHEJ) DNA repair enzyme, which repairs dsDNA breaks with reduced fidelity. Binds linear dsDNA with 5'- and 3'- overhangs but not closed circular dsDNA nor ssDNA. Recruits and stimulates the ligase activity of LigD. The sequence is that of Non-homologous end joining protein Ku from Desulfitobacterium hafniense (strain DSM 10664 / DCB-2).